A 780-amino-acid chain; its full sequence is Subtilisin-like protease SBT1.3 (780 aa).

The N-terminal stretch at 1-25 (MANKNPLQKPFLFIILSINLIFLQA) is a signal peptide. Positions 26-120 (ETTTQISTKK…VIPETRYELH (95 aa)) are cleaved as a propeptide — activation peptide. Positions 36 to 120 (TYVIHMDKSA…VIPETRYELH (85 aa)) constitute an Inhibitor I9 domain. One can recognise a Peptidase S8 domain in the interval 116–628 (RYELHTTRSP…AGHIDPLRAT (513 aa)). The active-site Charge relay system is D154. An N-linked (GlcNAc...) asparagine glycan is attached at N165. H227 acts as the Charge relay system in catalysis. The region spanning 384–477 (KQYPLVYLGR…GEKEGKLIKQ (94 aa)) is the PA domain. A glycan (N-linked (GlcNAc...) asparagine) is linked at N394. S560 (charge relay system) is an active-site residue. Residues N663 and N731 are each glycosylated (N-linked (GlcNAc...) asparagine).

Belongs to the peptidase S8 family.

It localises to the secreted. This Arabidopsis thaliana (Mouse-ear cress) protein is Subtilisin-like protease SBT1.3.